The chain runs to 399 residues: MNIHEYQAKAVLQPFGVSLSKGVAILKASEAEAAAKQLPGPVWVVKSQIHAGGRGKGKFKEASAGSQGGVRLAKSIDEVKQFAQEMLGATLVTLQTGPAGKQVNRLYIEEGSAIDKEFYLSLLVDRATSRVSFVVSTEGGMNIEDVAHDTPEKIISFSVDPATGIMPHHGRIVAKTLGLTGELAKQAGKLTTQLYTAFVAKDMEMLEINPLVLTKDGELRCLDAKMSFDSNSLYRQPDVVALRDTTEEDAKEIEASKHELAYIALEGTIGCMVNGAGLAMATLDIIKLYGESPANFLDVGGGATEEKVTAAFKIITADPNVKGILVNIFGGIMKCDVIARGVIAAVKTVGLEVPLVVRLEGTNVEEGKAIIRDSGLNVLSADDLDDAAQKIVNAVKKAA.

Residues 9-254 form the ATP-grasp domain; the sequence is KAVLQPFGVS…TTEEDAKEIE (246 aa). ATP is bound by residues lysine 46, 53 to 55, glutamate 109, serine 112, and glutamate 117; that span reads GRG. Asparagine 209 and aspartate 223 together coordinate Mg(2+). Residues asparagine 274 and 331-333 contribute to the substrate site; that span reads GIM.

Belongs to the succinate/malate CoA ligase beta subunit family. As to quaternary structure, heterotetramer of two alpha and two beta subunits. Mg(2+) serves as cofactor.

The enzyme catalyses succinate + ATP + CoA = succinyl-CoA + ADP + phosphate. It catalyses the reaction GTP + succinate + CoA = succinyl-CoA + GDP + phosphate. It participates in carbohydrate metabolism; tricarboxylic acid cycle; succinate from succinyl-CoA (ligase route): step 1/1. In terms of biological role, succinyl-CoA synthetase functions in the citric acid cycle (TCA), coupling the hydrolysis of succinyl-CoA to the synthesis of either ATP or GTP and thus represents the only step of substrate-level phosphorylation in the TCA. The beta subunit provides nucleotide specificity of the enzyme and binds the substrate succinate, while the binding sites for coenzyme A and phosphate are found in the alpha subunit. The sequence is that of Succinate--CoA ligase [ADP-forming] subunit beta from Rhodopseudomonas palustris (strain BisA53).